A 1847-amino-acid chain; its full sequence is Peripheral-type benzodiazepine receptor-associated protein 1 (1847 aa).

Disordered stretches follow at residues 57-81 (EESSEPAGAHSPGPIRNTDPEGTET), 282-318 (NQREPLRPARSQGSTAPSSVGAPAPGAPGETVLEDDV), and 560-626 (SGPK…DTAS). Low complexity-rich tracts occupy residues 294-310 (GSTAPSSVGAPAPGAPG) and 600-613 (SLSNSSRSESIHNS). The SH3 1 domain occupies 651–718 (ARIQVFLARY…PSNFVERVSD (68 aa)). The disordered stretch occupies residues 728–787 (ELADSSHSSGPELSFLSGGGGGCSSGGQSSGGRSQPRPEEEATGDELSLSPPPEGLGEPL). The segment covering 744-757 (SGGGGGCSSGGQSS) has biased composition (gly residues). 3 consecutive Fibronectin type-III domains span residues 789–880 (VPYP…AGAG), 882–974 (VPSQ…TLPA), and 979–1077 (APLD…PALA). 5 disordered regions span residues 1107-1174 (LGYT…EGPD), 1191-1215 (DAGPTPCSTQEELTQKEPSTEVCHR), 1240-1307 (NSLV…ILEQ), 1322-1478 (FSIP…ESSL), and 1514-1616 (PTDG…SHQD). A compositionally biased stretch (polar residues) spans 1122–1133 (TQDSPASLSTEM). Basic and acidic residues predominate over residues 1203-1215 (LTQKEPSTEVCHR). Acidic residues predominate over residues 1253–1266 (DIQEEEEEEEEEEE). A compositionally biased stretch (polar residues) spans 1272–1284 (WSFQKQVAGNSIG). Composition is skewed to acidic residues over residues 1296–1305 (CETDSDEEIL) and 1325–1335 (PEEEEEEDEEE). A compositionally biased stretch (low complexity) spans 1340-1352 (PGPSSSSQDPSQP). 2 stretches are compositionally biased toward basic and acidic residues: residues 1412–1421 (RPQDPREHCS) and 1546–1578 (AWEKGEPERRGRSAIGRTKEPPSRATETGESRG). One can recognise an SH3 2 domain in the interval 1617-1685 (LPLRVFVALF…PCNMVAEVAV (69 aa)). Disordered regions lie at residues 1701–1747 (PPNV…PGPP) and 1818–1847 (LEGPGPEAGGLDSGTSQAESQRTRRRRVQC). The 68-residue stretch at 1756–1823 (KTSRPMVAAF…PSNFLEGPGP (68 aa)) folds into the SH3 3 domain.

It belongs to the RIMBP family. Interacts with RIMS1 and RIMS2. Interacts with TSPO. Interacts with CACNA1A. Specifically expressed in brain. High expression level in the limbic system such as the nucleus accumbens, septum, and hippocampus, as well as on the cerebellum and pineal gland. Abundant in the CA1 region of the hippocampus.

The protein resides in the cytoplasm. It is found in the mitochondrion. Functionally, required for synaptic transmission regulation. It probably controls the recruitement of voltage-gated calcium channels to the presynaptic membrane, and modulates neurotransmitter release. The polypeptide is Peripheral-type benzodiazepine receptor-associated protein 1 (Rattus norvegicus (Rat)).